Here is a 129-residue protein sequence, read N- to C-terminus: Virion-associated protein (129 aa).

2 coiled-coil regions span residues 1–31 (MANL…ILEL) and 38–59 (IKES…LIND). The capsid binding stretch occupies residues 122-129 (PAGWPNQF).

It belongs to the caulimovirus ORF III family. As to quaternary structure, homotetramer, through coiled-coil domain. Homotrimer when bound on icosehadral capsid. Interacts with capsid protein, and with movement protein.

The protein localises to the virion. It localises to the host cell junction. It is found in the host plasmodesma. In terms of biological role, plays a role in virus cell-to-cell and plant-to-plant transmission. Interacts with virion icosahedral capsid and movement protein, thereby facilitating virion cell-to-cell transmission through plasmodesmata opened by viral movement protein. Also interacts with aphid transmission factor, attaching the virion to aphid stylet when the animal feeds on an virus infected plant. Aphid saliva may later detach the virion, inducing release of infectious particles when the animal feeds on a new plant. The sequence is that of Virion-associated protein from Cauliflower mosaic virus (strain Strasbourg) (CaMV).